The sequence spans 347 residues: Heat-inducible transcription repressor HrcA (347 aa).

This sequence belongs to the HrcA family.

In terms of biological role, negative regulator of class I heat shock genes (grpE-dnaK-dnaJ and groELS operons). Prevents heat-shock induction of these operons. The polypeptide is Heat-inducible transcription repressor HrcA (Desulforamulus reducens (strain ATCC BAA-1160 / DSM 100696 / MI-1) (Desulfotomaculum reducens)).